The primary structure comprises 1090 residues: Protein unc-13 homolog D (1090 aa).

In terms of domain architecture, C2 1 spans 92 to 239; the sequence is EPEEHQQTLQ…FKEARKDKGQ (148 aa). Positions 127 and 133 each coordinate Ca(2+). The residue at position 150 (serine 150) is a Phosphoserine. Aspartate 206 and aspartate 208 together coordinate Ca(2+). An interaction with RAB27A region spans residues 240–543; that stretch reads DDFLGNVVLR…AKRVQDHTTV (304 aa). The MHD1 domain occupies 557-677; it reads FQLYISLKEL…RLALVYCSLI (121 aa). The 108-residue stretch at 788–895 folds into the MHD2 domain; sequence EDAILPLMKF…ASSRELIRKY (108 aa). In terms of domain architecture, C2 2 spans 910–1035; that stretch reads ELGAVTVKAS…PGLSGSEEPG (126 aa). Residues leucine 940, aspartate 941, aspartate 947, aspartate 1005, aspartate 1007, and aspartate 1013 each coordinate Ca(2+). Positions 1026-1048 are disordered; the sequence is PGLSGSEEPGEVPQTRLPLTYPA.

This sequence belongs to the unc-13 family. Interacts with DOC2A. Interacts with RAB27A. Interacts with RHOG; the interaction increases RhoG affinity to the membrane lipids, targets UNC13D to membrane lipids and facilitates cytotoxic granule (CG) docking to the plasma membrane. Requires Ca(2+) as cofactor. In terms of tissue distribution, expressed at high levels in spleen, thymus and leukocytes. Also expressed in lung and placenta, and at very low levels in brain, heart, skeletal muscle and kidney. Expressed in cytotoxic T-lymphocytes (CTL) and mast cells.

It is found in the cytoplasm. The protein localises to the membrane. Its subcellular location is the late endosome. It localises to the recycling endosome. The protein resides in the lysosome. Plays a role in cytotoxic granule exocytosis in lymphocytes. Required for both granule maturation and granule docking and priming at the immunologic synapse. Regulates assembly of recycling and late endosomal structures, leading to the formation of an endosomal exocytic compartment that fuses with perforin-containing granules at the immunologic synapse and licences them for exocytosis. Regulates Ca(2+)-dependent secretory lysosome exocytosis in mast cells. This Homo sapiens (Human) protein is Protein unc-13 homolog D (UNC13D).